The chain runs to 381 residues: Prostatic acid phosphatase (381 aa).

An N-terminal signal peptide occupies residues M1–A31. Residue R42 coordinates substrate. H43 functions as the Nucleophile in the catalytic mechanism. R46 serves as a coordination point for substrate. N93 carries an N-linked (GlcNAc...) asparagine glycan. Substrate is bound at residue R110. Cystine bridges form between C160–C371, C214–C312, and C346–C350. N219 carries N-linked (GlcNAc...) asparagine glycosylation. A substrate-binding site is contributed by H288. D289 acts as the Proton donor in catalysis. An N-linked (GlcNAc...) asparagine glycan is attached at N332.

It belongs to the histidine acid phosphatase family. As to quaternary structure, homodimer; dimer formation is required for phosphatase activity. Expressed in salivary gland, thymus and thyroid gland. In terms of tissue distribution, widely expressed in prostate lobes, brain, kidney, liver, lung, muscle, placenta, salivary gland, spleen, thyroid and thymus. Locates to Schwann cells and fibroblasts. Expressed in peptidergic and non-peptidergic nociceptive (pain-sensing) neurons. Preferentially expressed in non-peptidergic doral root ganglia neurons.

It localises to the secreted. The protein resides in the cell membrane. It is found in the lysosome membrane. The catalysed reaction is a phosphate monoester + H2O = an alcohol + phosphate. It carries out the reaction a ribonucleoside 5'-phosphate + H2O = a ribonucleoside + phosphate. It catalyses the reaction 1-(9Z-octadecenoyl)-sn-glycero-3-phosphate + H2O = 1-(9Z-octadecenoyl)-sn-glycerol + phosphate. The enzyme catalyses O-phospho-L-tyrosyl-[protein] + H2O = L-tyrosyl-[protein] + phosphate. Its function is as follows. A non-specific tyrosine phosphatase that dephosphorylates a diverse number of substrates under acidic conditions (pH 4-6) including alkyl, aryl, and acyl orthophosphate monoesters and phosphorylated proteins. Has lipid phosphatase activity and inactivates lysophosphatidic acid in seminal plasma. Functionally, in addition to its tyrosine phosphatase activity, also has ecto-5'-nucleotidase activity in dorsal root ganglion (DRG) neurons. Generates adenosine from AMP. This extracellular adenosine leads to a decrease in chronic pain by activating A1R in nociceptive neurons. The protein is Prostatic acid phosphatase (Acp3) of Mus musculus (Mouse).